Reading from the N-terminus, the 479-residue chain is Cardiolipin synthase A (479 aa).

A run of 2 helical transmembrane segments spans residues 8–28 (FFGYVLGLVHLLGIIAALHAV) and 38–58 (IAWAMSLFFIPYFTLIPYLVF). PLD phosphodiesterase domains lie at 218–245 (VNFRNHRKIVVVDGVTGFIGGHNVGDEY) and 392–419 (QPGFLHQKVVLVDDEVSAIGSANLDNRS). Active-site residues include His-223, Lys-225, Asp-230, His-397, Lys-399, and Asp-404.

The protein belongs to the phospholipase D family. Cardiolipin synthase subfamily. ClsA sub-subfamily.

The protein resides in the cell inner membrane. The enzyme catalyses 2 a 1,2-diacyl-sn-glycero-3-phospho-(1'-sn-glycerol) = a cardiolipin + glycerol. Catalyzes the reversible phosphatidyl group transfer from one phosphatidylglycerol molecule to another to form cardiolipin (CL) (diphosphatidylglycerol) and glycerol. The protein is Cardiolipin synthase A of Pseudomonas putida (strain W619).